The chain runs to 481 residues: MAEKITTRSADYSQWYIDLVRSAKLADYSDVRGCMVIRPNGYAIWEKMQTALDRMFKETGHVNAYFPLFIPESFIAKEAEHIEGFAPECAVVTHGGGEELAEKLYVRPTSETIIWSSYKKWIQSYRDLPILINQWANVVRWEMRTRLFLRTTEFLWQEGHTAHATPEESQEEVVRMINVYKTFAENYMALPVIIGKKTDSEKFAGAVDTWCIEAMMQDSKALQAGTSHNLGQNFAKAFDCQFQTRDGKLDYVWATSWGVSTRLIGALIMAHSDDRGLVLPPKLATRQVVIIPILKGDKAAVCEKAHAISRTLSANGIPAFVDDSEQNSPGWKFAEYELQGIPLRIELGPRDIQNGTCIVARRDTLEKTELALDDTLSVSISEILNAIQQNLFDRALEFRNEHTFEASSYSEFREMVENGFVIAHWDGTAETEAKIKEETKATIRVLPEEPDYISRYAMHEAGTCIYSGNPAAQKAVFAKAY.

This sequence belongs to the class-II aminoacyl-tRNA synthetase family. ProS type 3 subfamily. In terms of assembly, homodimer.

The protein localises to the cytoplasm. The catalysed reaction is tRNA(Pro) + L-proline + ATP = L-prolyl-tRNA(Pro) + AMP + diphosphate. Functionally, catalyzes the attachment of proline to tRNA(Pro) in a two-step reaction: proline is first activated by ATP to form Pro-AMP and then transferred to the acceptor end of tRNA(Pro). This chain is Proline--tRNA ligase, found in Chlorobium phaeobacteroides (strain DSM 266 / SMG 266 / 2430).